A 332-amino-acid chain; its full sequence is Fructose-1,6-bisphosphatase class 1 (332 aa).

4 residues coordinate Mg(2+): E94, D116, L118, and D119. Substrate is bound by residues 119-122, N211, Y239, 257-259, and K269; these read DGSS and YLY. E275 contacts Mg(2+).

It belongs to the FBPase class 1 family. In terms of assembly, homotetramer. It depends on Mg(2+) as a cofactor.

The protein resides in the cytoplasm. It catalyses the reaction beta-D-fructose 1,6-bisphosphate + H2O = beta-D-fructose 6-phosphate + phosphate. The protein operates within carbohydrate biosynthesis; Calvin cycle. This chain is Fructose-1,6-bisphosphatase class 1, found in Synechococcus sp. (strain JA-3-3Ab) (Cyanobacteria bacterium Yellowstone A-Prime).